The following is a 215-amino-acid chain: Large ribosomal subunit protein eL15 (215 aa).

A disordered region spans residues 179–215 (GTVKHKWKKKEKEREQKKRHEATKYYRLQNYDKLPGK). Basic and acidic residues predominate over residues 188-202 (KEKEREQKKRHEATK).

This sequence belongs to the eukaryotic ribosomal protein eL15 family.

In Sulfurisphaera tokodaii (strain DSM 16993 / JCM 10545 / NBRC 100140 / 7) (Sulfolobus tokodaii), this protein is Large ribosomal subunit protein eL15.